A 25-amino-acid polypeptide reads, in one-letter code: Xenoposin precursor fragment R2 (25 aa).

As to expression, expressed by the skin glands.

The protein localises to the secreted. Antimicrobial peptide. The sequence is that of Xenoposin precursor fragment R2 from Xenopus ruwenzoriensis (Uganda clawed frog).